Here is an 82-residue protein sequence, read N- to C-terminus: Small ribosomal subunit protein uS15 (82 aa).

It belongs to the universal ribosomal protein uS15 family. In terms of assembly, part of the 30S ribosomal subunit. Forms a bridge to the 50S subunit in the 70S ribosome, contacting the 23S rRNA.

Functionally, one of the primary rRNA binding proteins, it binds directly to 16S rRNA where it helps nucleate assembly of the platform of the 30S subunit by binding and bridging several RNA helices of the 16S rRNA. Its function is as follows. Forms an intersubunit bridge (bridge B4) with the 23S rRNA of the 50S subunit in the ribosome. The protein is Small ribosomal subunit protein uS15 of Pelagibacter ubique (strain HTCC1062).